Consider the following 48-residue polypeptide: ATP synthase protein 8 (48 aa).

A helical transmembrane segment spans residues 13-32 (VVFTLISLSFIFFVFSKYIL).

Belongs to the ATPase protein 8 family. In terms of assembly, F-type ATPases have 2 components, CF(1) - the catalytic core - and CF(0) - the membrane proton channel.

The protein localises to the mitochondrion membrane. Mitochondrial membrane ATP synthase (F(1)F(0) ATP synthase or Complex V) produces ATP from ADP in the presence of a proton gradient across the membrane which is generated by electron transport complexes of the respiratory chain. F-type ATPases consist of two structural domains, F(1) - containing the extramembraneous catalytic core and F(0) - containing the membrane proton channel, linked together by a central stalk and a peripheral stalk. During catalysis, ATP synthesis in the catalytic domain of F(1) is coupled via a rotary mechanism of the central stalk subunits to proton translocation. Part of the complex F(0) domain. Minor subunit located with subunit a in the membrane. The chain is ATP synthase protein 8 (ATP8) from Trichophyton rubrum (Athlete's foot fungus).